Consider the following 366-residue polypeptide: NAD(P)H-quinone oxidoreductase subunit 1, chloroplastic (366 aa).

8 helical membrane passes run 29 to 49, 97 to 117, 130 to 150, 166 to 186, 202 to 222, 254 to 274, 307 to 327, and 340 to 360; these read WITASILILVSGVVIGVLVIV, LLFSIGPAIVVIPVLLSYLVI, IGVFFWIAVSSIAPLGLFMAG, VAQAISYEIPLALCVLSISLL, FGFWGWNVWRQPIGFIAFLIA, FGLFYVASYLNLLVSSLFVTV, VIIGIIITLAKAYSFLFISIV, and LLNLGWKFLLPIALGNLLLTA.

It belongs to the complex I subunit 1 family. In terms of assembly, NDH is composed of at least 16 different subunits, 5 of which are encoded in the nucleus.

Its subcellular location is the plastid. The protein resides in the chloroplast thylakoid membrane. The enzyme catalyses a plastoquinone + NADH + (n+1) H(+)(in) = a plastoquinol + NAD(+) + n H(+)(out). It carries out the reaction a plastoquinone + NADPH + (n+1) H(+)(in) = a plastoquinol + NADP(+) + n H(+)(out). In terms of biological role, NDH shuttles electrons from NAD(P)H:plastoquinone, via FMN and iron-sulfur (Fe-S) centers, to quinones in the photosynthetic chain and possibly in a chloroplast respiratory chain. The immediate electron acceptor for the enzyme in this species is believed to be plastoquinone. Couples the redox reaction to proton translocation, and thus conserves the redox energy in a proton gradient. The chain is NAD(P)H-quinone oxidoreductase subunit 1, chloroplastic from Anthoceros angustus (Hornwort).